Consider the following 508-residue polypeptide: 2,3-bisphosphoglycerate-independent phosphoglycerate mutase (508 aa).

Mn(2+) contacts are provided by D14 and S64. S64 (phosphoserine intermediate) is an active-site residue. Substrate is bound by residues H125, 155 to 156 (RD), R187, R193, 259 to 262 (RADR), and K332. D399, H403, D440, H441, and H459 together coordinate Mn(2+).

Belongs to the BPG-independent phosphoglycerate mutase family. As to quaternary structure, monomer. It depends on Mn(2+) as a cofactor.

The catalysed reaction is (2R)-2-phosphoglycerate = (2R)-3-phosphoglycerate. It functions in the pathway carbohydrate degradation; glycolysis; pyruvate from D-glyceraldehyde 3-phosphate: step 3/5. Functionally, catalyzes the interconversion of 2-phosphoglycerate and 3-phosphoglycerate. The chain is 2,3-bisphosphoglycerate-independent phosphoglycerate mutase from Pseudomonas fluorescens (strain Pf0-1).